We begin with the raw amino-acid sequence, 253 residues long: Prepilin leader peptidase/N-methyltransferase (253 aa).

Residues 4–24 (VYLILFSIVSLILGSFSNVVI) form a helical membrane-spanning segment. Residues cysteine 48, cysteine 51, cysteine 73, and cysteine 76 each contribute to the Zn(2+) site. Helical transmembrane passes span 80–100 (ISLS…PIYW), 106–126 (VDSF…VIDF), 129–149 (MLLP…YVQQ), 159–179 (IIGG…VRLF), 198–218 (TLIG…IAFI), and 230–250 (CLYI…FFSI).

This sequence belongs to the peptidase A24 family. Zn(2+) is required as a cofactor.

Its subcellular location is the cell inner membrane. It carries out the reaction Typically cleaves a -Gly-|-Phe- bond to release an N-terminal, basic peptide of 5-8 residues from type IV prepilin, and then N-methylates the new N-terminal amino group, the methyl donor being S-adenosyl-L-methionine.. In terms of biological role, plays an essential role in type IV pili and type II pseudopili formation by proteolytically removing the leader sequence from substrate proteins and subsequently monomethylating the alpha-amino group of the newly exposed N-terminal phenylalanine. This Vibrio cholerae serotype O1 (strain ATCC 39315 / El Tor Inaba N16961) protein is Prepilin leader peptidase/N-methyltransferase (tcpJ).